The following is an 883-amino-acid chain: Phosphoenolpyruvate carboxylase (883 aa).

Active-site residues include His-138 and Lys-546.

It belongs to the PEPCase type 1 family. Requires Mg(2+) as cofactor.

It catalyses the reaction oxaloacetate + phosphate = phosphoenolpyruvate + hydrogencarbonate. In terms of biological role, forms oxaloacetate, a four-carbon dicarboxylic acid source for the tricarboxylic acid cycle. The polypeptide is Phosphoenolpyruvate carboxylase (Escherichia coli O127:H6 (strain E2348/69 / EPEC)).